Consider the following 295-residue polypeptide: Small ribosomal subunit protein uS2 (295 aa).

It belongs to the universal ribosomal protein uS2 family. Component of the small ribosomal subunit. Mature ribosomes consist of a small (40S) and a large (60S) subunit. The 40S subunit contains about 33 different proteins and 1 molecule of RNA (18S). The 60S subunit contains about 49 different proteins and 3 molecules of RNA (25S, 5.8S and 5S). Interacts with RPS21.

Its subcellular location is the cytoplasm. Required for the assembly and/or stability of the 40S ribosomal subunit. Required for the processing of the 20S rRNA-precursor to mature 18S rRNA in a late step of the maturation of 40S ribosomal subunits. The chain is Small ribosomal subunit protein uS2 from Paracoccidioides brasiliensis (strain Pb18).